The sequence spans 113 residues: MTSEQFEYHLTGKEILEKEFKTGLRGYNPEDVDEFLDMVIKDYSTFTQEIEALQAENIRLVQELDNAPVRTTTQPAPTFQAAAQPAGTTNFDILKRLSNLEKHVFGNKLDDNE.

Residues 36–68 adopt a coiled-coil conformation; it reads LDMVIKDYSTFTQEIEALQAENIRLVQELDNAP.

The protein belongs to the GpsB family. Forms polymers through the coiled coil domains. Interacts with PBP1, MreC and EzrA.

The protein resides in the cytoplasm. Its function is as follows. Divisome component that associates with the complex late in its assembly, after the Z-ring is formed, and is dependent on DivIC and PBP2B for its recruitment to the divisome. Together with EzrA, is a key component of the system that regulates PBP1 localization during cell cycle progression. Its main role could be the removal of PBP1 from the cell pole after pole maturation is completed. Also contributes to the recruitment of PBP1 to the division complex. Not essential for septum formation. This is Cell cycle protein GpsB from Listeria innocua serovar 6a (strain ATCC BAA-680 / CLIP 11262).